The following is a 116-amino-acid chain: Large ribosomal subunit protein uL18 (116 aa).

The protein belongs to the universal ribosomal protein uL18 family. As to quaternary structure, part of the 50S ribosomal subunit; part of the 5S rRNA/L5/L18/L25 subcomplex. Contacts the 5S and 23S rRNAs.

This is one of the proteins that bind and probably mediate the attachment of the 5S RNA into the large ribosomal subunit, where it forms part of the central protuberance. In Shewanella loihica (strain ATCC BAA-1088 / PV-4), this protein is Large ribosomal subunit protein uL18.